Here is a 117-residue protein sequence, read N- to C-terminus: Large ribosomal subunit protein uL24 (117 aa).

Positions 1–12 are enriched in polar residues; it reads MSKKNSQTSPQR. A disordered region spans residues 1-20; it reads MSKKNSQTSPQRQKMHVKKG.

Belongs to the universal ribosomal protein uL24 family. Part of the 50S ribosomal subunit.

Its function is as follows. One of two assembly initiator proteins, it binds directly to the 5'-end of the 23S rRNA, where it nucleates assembly of the 50S subunit. Functionally, one of the proteins that surrounds the polypeptide exit tunnel on the outside of the subunit. The polypeptide is Large ribosomal subunit protein uL24 (Microcystis aeruginosa (strain NIES-843 / IAM M-2473)).